We begin with the raw amino-acid sequence, 256 residues long: Enolase-phosphatase E1 (256 aa).

2 residues coordinate Mg(2+): Asp-14 and Glu-16. Substrate contacts are provided by residues Ser-142–Ser-143 and Lys-176. Asp-201 serves as a coordination point for Mg(2+).

It belongs to the HAD-like hydrolase superfamily. MasA/MtnC family. In terms of assembly, monomer. Requires Mg(2+) as cofactor.

The protein resides in the cytoplasm. The protein localises to the nucleus. The catalysed reaction is 5-methylsulfanyl-2,3-dioxopentyl phosphate + H2O = 1,2-dihydroxy-5-(methylsulfanyl)pent-1-en-3-one + phosphate. The protein operates within amino-acid biosynthesis; L-methionine biosynthesis via salvage pathway; L-methionine from S-methyl-5-thio-alpha-D-ribose 1-phosphate: step 3/6. It participates in amino-acid biosynthesis; L-methionine biosynthesis via salvage pathway; L-methionine from S-methyl-5-thio-alpha-D-ribose 1-phosphate: step 4/6. In terms of biological role, bifunctional enzyme that catalyzes the enolization of 2,3-diketo-5-methylthiopentyl-1-phosphate (DK-MTP-1-P) into the intermediate 2-hydroxy-3-keto-5-methylthiopentenyl-1-phosphate (HK-MTPenyl-1-P), which is then dephosphorylated to form the acireductone 1,2-dihydroxy-3-keto-5-methylthiopentene (DHK-MTPene). In Drosophila simulans (Fruit fly), this protein is Enolase-phosphatase E1.